Reading from the N-terminus, the 92-residue chain is Small ribosomal subunit protein uS17 (92 aa).

It belongs to the universal ribosomal protein uS17 family. Part of the 30S ribosomal subunit.

Its function is as follows. One of the primary rRNA binding proteins, it binds specifically to the 5'-end of 16S ribosomal RNA. The protein is Small ribosomal subunit protein uS17 of Cupriavidus pinatubonensis (strain JMP 134 / LMG 1197) (Cupriavidus necator (strain JMP 134)).